The chain runs to 302 residues: Potassium/proton antiporter CemA (302 aa).

4 consecutive transmembrane segments (helical) span residues 55-75, 187-207, 225-247, and 262-282; these read VFVS…ITFL, FVSF…IIIL, FLLI…ELFL, and FIFL…KYWI.

Belongs to the CemA family.

Its subcellular location is the plastid. It localises to the chloroplast inner membrane. The catalysed reaction is K(+)(in) + H(+)(out) = K(+)(out) + H(+)(in). Contributes to K(+)/H(+) antiport activity by supporting proton efflux to control proton extrusion and homeostasis in chloroplasts in a light-dependent manner to modulate photosynthesis. Prevents excessive induction of non-photochemical quenching (NPQ) under continuous-light conditions. Indirectly promotes efficient inorganic carbon uptake into chloroplasts. The sequence is that of Potassium/proton antiporter CemA from Tupiella akineta (Green alga).